The chain runs to 99 residues: NADH-quinone oxidoreductase subunit K (99 aa).

Transmembrane regions (helical) follow at residues 2–22 (PVEY…LGVL), 28–48 (LILM…FLAF), and 60–80 (IAFF…AVVI).

The protein belongs to the complex I subunit 4L family. NDH-1 is composed of 14 different subunits. Subunits NuoA, H, J, K, L, M, N constitute the membrane sector of the complex.

The protein resides in the cell inner membrane. It catalyses the reaction a quinone + NADH + 5 H(+)(in) = a quinol + NAD(+) + 4 H(+)(out). Functionally, NDH-1 shuttles electrons from NADH, via FMN and iron-sulfur (Fe-S) centers, to quinones in the respiratory chain. The immediate electron acceptor for the enzyme in this species is believed to be ubiquinone. Couples the redox reaction to proton translocation (for every two electrons transferred, four hydrogen ions are translocated across the cytoplasmic membrane), and thus conserves the redox energy in a proton gradient. The polypeptide is NADH-quinone oxidoreductase subunit K (Anaeromyxobacter dehalogenans (strain 2CP-1 / ATCC BAA-258)).